A 270-amino-acid polypeptide reads, in one-letter code: Urease accessory protein UreD (270 aa).

The protein belongs to the UreD family. As to quaternary structure, ureD, UreF and UreG form a complex that acts as a GTP-hydrolysis-dependent molecular chaperone, activating the urease apoprotein by helping to assemble the nickel containing metallocenter of UreC. The UreE protein probably delivers the nickel.

It is found in the cytoplasm. Its function is as follows. Required for maturation of urease via the functional incorporation of the urease nickel metallocenter. This Actinobacillus pleuropneumoniae serotype 3 (strain JL03) protein is Urease accessory protein UreD.